We begin with the raw amino-acid sequence, 477 residues long: Bifunctional protein HldE (477 aa).

Residues 1 to 320 form a ribokinase region; the sequence is MKDSLPAFEK…SLSDTHHSET (320 aa). 195 to 198 provides a ligand contact to ATP; it reads NLHE. D264 is an active-site residue. A cytidylyltransferase region spans residues 346–477; the sequence is MTNGCFDILH…KIIENIMANQ (132 aa).

It in the N-terminal section; belongs to the carbohydrate kinase PfkB family. The protein in the C-terminal section; belongs to the cytidylyltransferase family. In terms of assembly, homodimer.

It carries out the reaction D-glycero-beta-D-manno-heptose 7-phosphate + ATP = D-glycero-beta-D-manno-heptose 1,7-bisphosphate + ADP + H(+). The catalysed reaction is D-glycero-beta-D-manno-heptose 1-phosphate + ATP + H(+) = ADP-D-glycero-beta-D-manno-heptose + diphosphate. Its pathway is nucleotide-sugar biosynthesis; ADP-L-glycero-beta-D-manno-heptose biosynthesis; ADP-L-glycero-beta-D-manno-heptose from D-glycero-beta-D-manno-heptose 7-phosphate: step 1/4. It functions in the pathway nucleotide-sugar biosynthesis; ADP-L-glycero-beta-D-manno-heptose biosynthesis; ADP-L-glycero-beta-D-manno-heptose from D-glycero-beta-D-manno-heptose 7-phosphate: step 3/4. Catalyzes the phosphorylation of D-glycero-D-manno-heptose 7-phosphate at the C-1 position to selectively form D-glycero-beta-D-manno-heptose-1,7-bisphosphate. Its function is as follows. Catalyzes the ADP transfer from ATP to D-glycero-beta-D-manno-heptose 1-phosphate, yielding ADP-D-glycero-beta-D-manno-heptose. This chain is Bifunctional protein HldE, found in Shewanella piezotolerans (strain WP3 / JCM 13877).